Reading from the N-terminus, the 132-residue chain is Small ribosomal subunit protein uS11 (132 aa).

Belongs to the universal ribosomal protein uS11 family. In terms of assembly, part of the 30S ribosomal subunit. Interacts with proteins S7 and S18. Binds to IF-3.

Located on the platform of the 30S subunit, it bridges several disparate RNA helices of the 16S rRNA. Forms part of the Shine-Dalgarno cleft in the 70S ribosome. This chain is Small ribosomal subunit protein uS11, found in Legionella pneumophila (strain Corby).